A 374-amino-acid chain; its full sequence is Flagellar P-ring protein (374 aa).

The N-terminal stretch at 1-29 is a signal peptide; it reads MRRVRTTRLFQVACAAIVALASSAMSAHA.

Belongs to the FlgI family. In terms of assembly, the basal body constitutes a major portion of the flagellar organelle and consists of four rings (L,P,S, and M) mounted on a central rod.

It localises to the periplasm. It is found in the bacterial flagellum basal body. Its function is as follows. Assembles around the rod to form the L-ring and probably protects the motor/basal body from shearing forces during rotation. The chain is Flagellar P-ring protein from Bradyrhizobium sp. (strain BTAi1 / ATCC BAA-1182).